Consider the following 92-residue polypeptide: Small ribosomal subunit protein uS19 (92 aa).

This sequence belongs to the universal ribosomal protein uS19 family.

Protein S19 forms a complex with S13 that binds strongly to the 16S ribosomal RNA. This Shewanella putrefaciens (strain CN-32 / ATCC BAA-453) protein is Small ribosomal subunit protein uS19.